The sequence spans 435 residues: Probable histidine--tRNA ligase, cytoplasmic (435 aa).

Belongs to the class-II aminoacyl-tRNA synthetase family.

It is found in the cytoplasm. It catalyses the reaction tRNA(His) + L-histidine + ATP = L-histidyl-tRNA(His) + AMP + diphosphate + H(+). This Encephalitozoon cuniculi (strain GB-M1) (Microsporidian parasite) protein is Probable histidine--tRNA ligase, cytoplasmic.